A 1371-amino-acid chain; its full sequence is Serine protease pic autotransporter (1371 aa).

The N-terminal stretch at 1–55 (MNKVYSLKYCPVTGGLIVVSELASRVIKKTCRRLTHILLAGIPAVYLYYPQISQA) is a signal peptide. Positions 56-301 (GIVRSDIAYQ…NVIPTDYLNQ (246 aa)) constitute a Peptidase S6 domain. Catalysis depends on charge relay system residues H127, D155, and S258. The 267-residue stretch at 1105 to 1371 (DTNGDAGAWA…AVNANFRYMF (267 aa)) folds into the Autotransporter domain.

Cleaved to release the mature protein from the outer membrane.

The protein localises to the periplasm. It is found in the secreted. The protein resides in the cell surface. It localises to the cell outer membrane. Functionally, involved in virulence of uropathogenic E.coli although it is not known how it contributes to it. Has no mucinase activity. The polypeptide is Serine protease pic autotransporter (pic) (Escherichia coli O6:H1 (strain CFT073 / ATCC 700928 / UPEC)).